We begin with the raw amino-acid sequence, 209 residues long: Large ribosomal subunit protein bL25 (209 aa).

Disordered stretches follow at residues 1 to 20 (MSKS…KGSS) and 190 to 209 (LDVS…TQTS). Residues 8-20 (KAEKRERVGKGSS) are compositionally biased toward basic and acidic residues. Over residues 192-209 (VSDETSEQEKDEGETQTS) the composition is skewed to acidic residues.

The protein belongs to the bacterial ribosomal protein bL25 family. CTC subfamily. In terms of assembly, part of the 50S ribosomal subunit; part of the 5S rRNA/L5/L18/L25 subcomplex. Contacts the 5S rRNA. Binds to the 5S rRNA independently of L5 and L18.

Its function is as follows. This is one of the proteins that binds to the 5S RNA in the ribosome where it forms part of the central protuberance. The polypeptide is Large ribosomal subunit protein bL25 (Bartonella tribocorum (strain CIP 105476 / IBS 506)).